The chain runs to 464 residues: Argininosuccinate lyase (464 aa).

It belongs to the lyase 1 family. Argininosuccinate lyase subfamily.

The protein resides in the cytoplasm. It catalyses the reaction 2-(N(omega)-L-arginino)succinate = fumarate + L-arginine. It functions in the pathway amino-acid biosynthesis; L-arginine biosynthesis; L-arginine from L-ornithine and carbamoyl phosphate: step 3/3. The chain is Argininosuccinate lyase from Pseudomonas fluorescens (strain ATCC BAA-477 / NRRL B-23932 / Pf-5).